Reading from the N-terminus, the 258-residue chain is MSSLLSKTRRLNKILQKTGTEPVAFQDICTLLSEVLECNAYIVSKRGKVLGYTFSPGFECEAMKKKVIEDKKFPEDYNLTLLESNETLANLYNQGRCVFAEIGDCKTKDKISTIIPIIGSRERLGTLILARFGKEFTDDDLVLVEYSATIVGMEMLRALQEDLADQTRKKAVVQLAIGTLSYSELEAVEHIFEELNGNEGLLVASKIADKVGITRSVIVNALRKFESAGVIESRSLGMKGTYIRVLNEKLLDELKKIK.

Residues 1 to 156 are GAF domain; it reads MSSLLSKTRR…SATIVGMEML (156 aa). Positions 204–223 form a DNA-binding region, H-T-H motif; the sequence is ASKIADKVGITRSVIVNALR.

This sequence belongs to the CodY family.

It is found in the cytoplasm. In terms of biological role, DNA-binding global transcriptional regulator which is involved in the adaptive response to starvation and acts by directly or indirectly controlling the expression of numerous genes in response to nutrient availability. During rapid exponential growth, CodY is highly active and represses genes whose products allow adaptation to nutrient depletion. The sequence is that of Global transcriptional regulator CodY from Clostridium botulinum (strain Eklund 17B / Type B).